A 164-amino-acid polypeptide reads, in one-letter code: Methyl-coenzyme M reductase I operon protein D (164 aa).

In terms of assembly, MCR is composed of three subunits: alpha, beta, and gamma. The function of proteins C and D is not known.

This is Methyl-coenzyme M reductase I operon protein D (mcrD) from Methanocaldococcus jannaschii (strain ATCC 43067 / DSM 2661 / JAL-1 / JCM 10045 / NBRC 100440) (Methanococcus jannaschii).